Reading from the N-terminus, the 393-residue chain is Elongation factor Tu (393 aa).

Positions 10–203 (KPHVNIGTIG…AVDAFIPDPV (194 aa)) constitute a tr-type G domain. Residues 19–26 (GHVDHGKT) form a G1 region. 19 to 26 (GHVDHGKT) provides a ligand contact to GTP. Residue T26 participates in Mg(2+) binding. The G2 stretch occupies residues 60–64 (GITIS). Positions 81–84 (DCPG) are G3. GTP is bound by residues 81-85 (DCPGH) and 136-139 (NKVD). The G4 stretch occupies residues 136–139 (NKVD). Positions 173-175 (SAL) are G5.

This sequence belongs to the TRAFAC class translation factor GTPase superfamily. Classic translation factor GTPase family. EF-Tu/EF-1A subfamily. In terms of assembly, monomer.

It is found in the cytoplasm. It carries out the reaction GTP + H2O = GDP + phosphate + H(+). Its function is as follows. GTP hydrolase that promotes the GTP-dependent binding of aminoacyl-tRNA to the A-site of ribosomes during protein biosynthesis. The polypeptide is Elongation factor Tu (Chlorobium chlorochromatii (strain CaD3)).